We begin with the raw amino-acid sequence, 203 residues long: LexA repressor (203 aa).

The segment at residues 30–50 (VREICQAVSLKSTSTVHGHLK) is a DNA-binding region (H-T-H motif). Active-site for autocatalytic cleavage activity residues include Ser-127 and Lys-164.

It belongs to the peptidase S24 family. Homodimer.

The catalysed reaction is Hydrolysis of Ala-|-Gly bond in repressor LexA.. In terms of biological role, represses a number of genes involved in the response to DNA damage (SOS response), including recA and lexA. In the presence of single-stranded DNA, RecA interacts with LexA causing an autocatalytic cleavage which disrupts the DNA-binding part of LexA, leading to derepression of the SOS regulon and eventually DNA repair. The sequence is that of LexA repressor from Clostridium perfringens (strain SM101 / Type A).